A 636-amino-acid polypeptide reads, in one-letter code: Tumor protein p73 (636 aa).

Residues 1–46 (MAQSTATSPDGGTTFEHLWSSLEPDSTYFDLPQSSRGNNEVVGGTD) are transactivation. Threonine 27 is subject to Phosphothreonine; by PLK1. Tyrosine 28 bears the Phosphotyrosine; by SRC and HCK mark. Residues 78–104 (RAASASPYTPEHAASVPTHSPYAQPSS) are disordered. Residues 94 to 104 (PTHSPYAQPSS) show a composition bias toward polar residues. Tyrosine 99 is subject to Phosphotyrosine; by ABL1. Residues 131–310 (FQQSSTAKSA…DRKADEDHYR (180 aa)) are DNA-binding. Positions 194, 197, 258, and 262 each coordinate Zn(2+). Positions 314-345 (ALNESSAKNGAASKRAFKQSPPAVPALGAGVK) are disordered. The interaction with HIPK2 stretch occupies residues 345-380 (KKRRHGDEDTYYLQVRGRENFEILMKLKESLELMEL). An oligomerization region spans residues 345–386 (KKRRHGDEDTYYLQVRGRENFEILMKLKESLELMELVPQPLV). Positions 483–487 (PPPPY) match the PPxY motif motif. One can recognise an SAM domain in the interval 485 to 551 (PPYHADPSLV…WRGLQDLKQG (67 aa)). A Glycyl lysine isopeptide (Lys-Gly) (interchain with G-Cter in SUMO); in isoform Alpha cross-link involves residue lysine 627. Lysine 627 participates in a covalent cross-link: Glycyl lysine isopeptide (Lys-Gly) (interchain with G-Cter in SUMO2).

Belongs to the p53 family. Found in a complex with p53/TP53 and CABLES1. The C-terminal oligomerization domain binds to the ABL1 tyrosine kinase SH3 domain. Interacts with HECW2. Isoform Beta interacts homotypically and with p53/TP53, whereas isoform Alpha does not. Isoform Gamma interacts homotypically and with all p73 isoforms. Isoform Delta interacts with isoform Gamma, isoform Alpha, and homotypically. Isoforms Alpha and Beta interact with HIPK2. Isoform Alpha interacts with RANBP9. Isoform Beta interacts with WWOX. Interacts (via SAM domain) with FBXO45 (via B30.2/SPRY domain). Interacts with YAP1 (phosphorylated form). Interacts with HCK (via SH3 domain); this inhibits TP73 activity and degradation. Interacts (via SAM domain) with NQO1; this interaction is NADH-dependent, stabilizes TP73 in response to oxidative stress and protects it from ubiquitin-independent degradation by the 20S proteasome. In terms of assembly, (Microbial infection) Interacts with Epstein-Barr virus protein EBNA6; this interaction inhibits TP73-mediated apoptotic pathway. Zn(2+) is required as a cofactor. In terms of processing, isoform alpha (but not isoform beta) is sumoylated on Lys-627, which potentiates proteasomal degradation but does not affect transcriptional activity. Phosphorylation by PLK1 and PLK3 inhibits the transcription regulator activity and pro-apoptotic function. Post-translationally, higher levels of phosphorylation seen in the brain from patients with Huntington disease. Polyubiquitinated by RCHY1/PIRH2; leading to its degradation by the proteasome. In terms of tissue distribution, expressed in striatal neurons of patients with Huntington disease (at protein level). Brain, kidney, placenta, colon, heart, liver, spleen, skeletal muscle, prostate, thymus and pancreas. Highly expressed in fetal tissue. Expressed in the respiratory epithelium.

The protein localises to the nucleus. The protein resides in the cytoplasm. Participates in the apoptotic response to DNA damage. Isoforms containing the transactivation domain are pro-apoptotic, isoforms lacking the domain are anti-apoptotic and block the function of p53 and transactivating p73 isoforms. May be a tumor suppressor protein. Is an activator of FOXJ1 expression. It is an essential factor for the positive regulation of lung ciliated cell differentiation. The protein is Tumor protein p73 (TP73) of Homo sapiens (Human).